The chain runs to 273 residues: Polyamine aminopropyltransferase (273 aa).

Residues 5 to 238 (ENWFSERYSD…GFWSFTIASE (234 aa)) enclose the PABS domain. Gln-34 contacts S-methyl-5'-thioadenosine. Residues His-65 and Asp-90 each coordinate spermidine. S-methyl-5'-thioadenosine contacts are provided by residues Glu-109 and 140 to 141 (DG). Asp-158 serves as the catalytic Proton acceptor. A spermidine-binding site is contributed by 158–161 (DSTD). Pro-165 contacts S-methyl-5'-thioadenosine.

Belongs to the spermidine/spermine synthase family. Homodimer or homotetramer.

The protein resides in the cytoplasm. The catalysed reaction is S-adenosyl 3-(methylsulfanyl)propylamine + putrescine = S-methyl-5'-thioadenosine + spermidine + H(+). It functions in the pathway amine and polyamine biosynthesis; spermidine biosynthesis; spermidine from putrescine: step 1/1. Functionally, catalyzes the irreversible transfer of a propylamine group from the amino donor S-adenosylmethioninamine (decarboxy-AdoMet) to putrescine (1,4-diaminobutane) to yield spermidine. This is Polyamine aminopropyltransferase from Thermoplasma volcanium (strain ATCC 51530 / DSM 4299 / JCM 9571 / NBRC 15438 / GSS1).